Consider the following 279-residue polypeptide: Bifunctional protein FolD (279 aa).

NADP(+)-binding positions include 164–166 (GRS), Ser-189, and Ile-230.

Belongs to the tetrahydrofolate dehydrogenase/cyclohydrolase family. As to quaternary structure, homodimer.

It catalyses the reaction (6R)-5,10-methylene-5,6,7,8-tetrahydrofolate + NADP(+) = (6R)-5,10-methenyltetrahydrofolate + NADPH. It carries out the reaction (6R)-5,10-methenyltetrahydrofolate + H2O = (6R)-10-formyltetrahydrofolate + H(+). It functions in the pathway one-carbon metabolism; tetrahydrofolate interconversion. Catalyzes the oxidation of 5,10-methylenetetrahydrofolate to 5,10-methenyltetrahydrofolate and then the hydrolysis of 5,10-methenyltetrahydrofolate to 10-formyltetrahydrofolate. This chain is Bifunctional protein FolD, found in Agathobacter rectalis (strain ATCC 33656 / DSM 3377 / JCM 17463 / KCTC 5835 / VPI 0990) (Eubacterium rectale).